A 228-amino-acid chain; its full sequence is PKHD-type hydroxylase Rmet_0838 (228 aa).

The region spanning 78-179 (RVLPPMFNRY…RWASFFWAQS (102 aa)) is the Fe2OG dioxygenase domain. Fe cation contacts are provided by histidine 96, aspartate 98, and histidine 160. Arginine 170 is a binding site for 2-oxoglutarate.

Fe(2+) is required as a cofactor. L-ascorbate serves as cofactor.

This is PKHD-type hydroxylase Rmet_0838 from Cupriavidus metallidurans (strain ATCC 43123 / DSM 2839 / NBRC 102507 / CH34) (Ralstonia metallidurans).